A 76-amino-acid polypeptide reads, in one-letter code: U7-lycotoxin-Ls1c (76 aa).

A signal peptide spans 1–22 (MKLIIFTGLALFLLVSLIDVEA). Residues 23–26 (QNEG) constitute a propeptide that is removed on maturation.

The protein belongs to the neurotoxin 19 (CSTX) family. 07 (U7-Lctx) subfamily. In terms of processing, contains 4 disulfide bonds. Expressed by the venom gland.

It is found in the secreted. The polypeptide is U7-lycotoxin-Ls1c (Lycosa singoriensis (Wolf spider)).